The chain runs to 476 residues: Serine/threonine-protein kinase WAG1 (476 aa).

Positions 93–400 (FKLVRHLGTG…AQDIKRHEFF (308 aa)) constitute a Protein kinase domain. ATP is bound by residues 99–107 (LGTGNLGRV) and K124. The active-site Proton acceptor is D219.

Belongs to the protein kinase superfamily. Ser/Thr protein kinase family. As to expression, expressed in root tips and lateral root primordia.

Its subcellular location is the cytoplasm. The protein localises to the cytosol. It catalyses the reaction L-seryl-[protein] + ATP = O-phospho-L-seryl-[protein] + ADP + H(+). The enzyme catalyses L-threonyl-[protein] + ATP = O-phospho-L-threonyl-[protein] + ADP + H(+). Its function is as follows. Serine/threonine-protein kinase involved in the regulation of auxin signaling. Acts as a positive regulator of cellular auxin efflux and regulates organ development by enhancing PIN-mediated polar auxin transport. Phosphorylates conserved serine residues in the PIN auxin efflux carriers. Phosphorylation of PIN proteins is required and sufficient for apical-basal PIN polarity that enables directional intercellular auxin fluxes, which mediate differential growth, tissue patterning and organogenesis. Acts as a suppressor of root waving. In Arabidopsis thaliana (Mouse-ear cress), this protein is Serine/threonine-protein kinase WAG1 (WAG1).